The chain runs to 769 residues: Serine protease HtrA-like (769 aa).

Over residues 1-20 (MDIGKKHVIPKSQYRRKRRE) the composition is skewed to basic residues. The segment at 1–390 (MDIGKKHVIP…ATSKLNKGRA (390 aa)) is disordered. Composition is skewed to basic and acidic residues over residues 21 to 64 (FFHN…ERFK) and 71 to 108 (LEQR…DVSK). The span at 126–137 (YEQNSEATLSTK) shows a compositional bias: polar residues. Residues 138–186 (STDKVESSDMRKLSPDKNKVGHEEQHVLSKPSEHDKETRIDFESSRTDS) are compositionally biased toward basic and acidic residues. 2 stretches are compositionally biased toward polar residues: residues 202–221 (GNES…NTVP) and 247–262 (QQSQ…YGDS). Residues 264–295 (QNDKSNHENDLSHHTPSKSDDKDNVMREDHIV) show a composition bias toward basic and acidic residues. The span at 298 to 308 (NPDNDINTPSL) shows a compositional bias: polar residues. The segment covering 310-330 (KIDDDRKLDEKIHVEDKHKQN) has biased composition (basic and acidic residues). The span at 331–347 (ADSSETVGYQSQSSVSH) shows a compositional bias: polar residues. Residues 348–362 (RSTEKRNMAINDHHK) are compositionally biased toward basic and acidic residues. Polar residues predominate over residues 366–390 (QKLNTKTSANNNQKKATSKLNKGRA). A helical membrane pass occupies residues 410–430 (LVILMGIIILIVILNAIFNNV). Residues H504, D534, and S619 each act as charge relay system in the active site. In terms of domain architecture, PDZ spans 680-733 (IASLNSFERQAVKLPGKVKNGVVVDQVDNNGLADQSSLKKGDVITELDGKLLED).

This sequence belongs to the peptidase S1C family.

Its subcellular location is the cell membrane. This chain is Serine protease HtrA-like, found in Staphylococcus aureus (strain bovine RF122 / ET3-1).